The chain runs to 283 residues: Pantothenate synthetase (283 aa).

An ATP-binding site is contributed by M30–H37. The Proton donor role is filled by H37. A (R)-pantoate-binding site is contributed by Q61. Beta-alanine is bound at residue Q61. Residue G149–D152 participates in ATP binding. Q155 contacts (R)-pantoate. Residue L186–R189 coordinates ATP.

It belongs to the pantothenate synthetase family. Homodimer.

It is found in the cytoplasm. It carries out the reaction (R)-pantoate + beta-alanine + ATP = (R)-pantothenate + AMP + diphosphate + H(+). Its pathway is cofactor biosynthesis; (R)-pantothenate biosynthesis; (R)-pantothenate from (R)-pantoate and beta-alanine: step 1/1. Functionally, catalyzes the condensation of pantoate with beta-alanine in an ATP-dependent reaction via a pantoyl-adenylate intermediate. The sequence is that of Pantothenate synthetase from Escherichia coli O6:H1 (strain CFT073 / ATCC 700928 / UPEC).